A 120-amino-acid chain; its full sequence is NAD(P)H-quinone oxidoreductase subunit 3 (120 aa).

Helical transmembrane passes span 11-31 (LIFLLLSALVPVLALTISYLI), 64-84 (MFALVFVVFDVETVFLYPWAV), and 89-109 (LGLLAFIEALIFIAILVVALV).

The protein belongs to the complex I subunit 3 family. NDH-1 can be composed of about 15 different subunits; different subcomplexes with different compositions have been identified which probably have different functions.

Its subcellular location is the cell inner membrane. It carries out the reaction a plastoquinone + NADH + (n+1) H(+)(in) = a plastoquinol + NAD(+) + n H(+)(out). It catalyses the reaction a plastoquinone + NADPH + (n+1) H(+)(in) = a plastoquinol + NADP(+) + n H(+)(out). NDH-1 shuttles electrons from an unknown electron donor, via FMN and iron-sulfur (Fe-S) centers, to quinones in the respiratory and/or the photosynthetic chain. The immediate electron acceptor for the enzyme in this species is believed to be plastoquinone. Couples the redox reaction to proton translocation, and thus conserves the redox energy in a proton gradient. Cyanobacterial NDH-1 also plays a role in inorganic carbon-concentration. The chain is NAD(P)H-quinone oxidoreductase subunit 3 from Gloeobacter violaceus (strain ATCC 29082 / PCC 7421).